We begin with the raw amino-acid sequence, 56 residues long: FAPVNVDCSDHPKPACLQEQKPLCGSDNKTYDNKCSFCNAVVDSNGTLTLSHFGKC.

Residues 6–56 (VDCSDHPKPACLQEQKPLCGSDNKTYDNKCSFCNAVVDSNGTLTLSHFGKC) form the Kazal-like domain. Intrachain disulfides connect cysteine 8–cysteine 38, cysteine 16–cysteine 35, and cysteine 24–cysteine 56. N-linked (GlcNAc...) asparagine glycosylation occurs at asparagine 45.

The protein localises to the secreted. The chain is Ovomucoid from Penelope jacquacu (Spix's guan).